A 159-amino-acid chain; its full sequence is 6,7-dimethyl-8-ribityllumazine synthase (159 aa).

5-amino-6-(D-ribitylamino)uracil contacts are provided by residues Phe-22, Thr-57–Glu-59, and Thr-81–Ile-83. Residue Ser-86–Thr-87 participates in (2S)-2-hydroxy-3-oxobutyl phosphate binding. His-89 (proton donor) is an active-site residue. Residue Met-114 coordinates 5-amino-6-(D-ribitylamino)uracil. A (2S)-2-hydroxy-3-oxobutyl phosphate-binding site is contributed by Arg-128.

The protein belongs to the DMRL synthase family. In terms of assembly, forms an icosahedral capsid composed of 60 subunits, arranged as a dodecamer of pentamers.

It catalyses the reaction (2S)-2-hydroxy-3-oxobutyl phosphate + 5-amino-6-(D-ribitylamino)uracil = 6,7-dimethyl-8-(1-D-ribityl)lumazine + phosphate + 2 H2O + H(+). It functions in the pathway cofactor biosynthesis; riboflavin biosynthesis; riboflavin from 2-hydroxy-3-oxobutyl phosphate and 5-amino-6-(D-ribitylamino)uracil: step 1/2. In terms of biological role, catalyzes the formation of 6,7-dimethyl-8-ribityllumazine by condensation of 5-amino-6-(D-ribitylamino)uracil with 3,4-dihydroxy-2-butanone 4-phosphate. This is the penultimate step in the biosynthesis of riboflavin. This Buchnera aphidicola subsp. Schizaphis graminum (strain Sg) protein is 6,7-dimethyl-8-ribityllumazine synthase.